Here is a 371-residue protein sequence, read N- to C-terminus: Probable dual-specificity RNA methyltransferase RlmN (371 aa).

E114 (proton acceptor) is an active-site residue. The 227-residue stretch at 120–346 (DGPRRSICVS…ESAGVNVNFR (227 aa)) folds into the Radical SAM core domain. The cysteines at positions 127 and 357 are disulfide-linked. 3 residues coordinate [4Fe-4S] cluster: C134, C138, and C141. S-adenosyl-L-methionine-binding positions include 183–184 (GE), S215, 238–240 (SLH), and N314. C357 acts as the S-methylcysteine intermediate in catalysis.

It belongs to the radical SAM superfamily. RlmN family. It depends on [4Fe-4S] cluster as a cofactor.

The protein localises to the cytoplasm. The enzyme catalyses adenosine(2503) in 23S rRNA + 2 reduced [2Fe-2S]-[ferredoxin] + 2 S-adenosyl-L-methionine = 2-methyladenosine(2503) in 23S rRNA + 5'-deoxyadenosine + L-methionine + 2 oxidized [2Fe-2S]-[ferredoxin] + S-adenosyl-L-homocysteine. The catalysed reaction is adenosine(37) in tRNA + 2 reduced [2Fe-2S]-[ferredoxin] + 2 S-adenosyl-L-methionine = 2-methyladenosine(37) in tRNA + 5'-deoxyadenosine + L-methionine + 2 oxidized [2Fe-2S]-[ferredoxin] + S-adenosyl-L-homocysteine. Specifically methylates position 2 of adenine 2503 in 23S rRNA and position 2 of adenine 37 in tRNAs. This is Probable dual-specificity RNA methyltransferase RlmN from Rhodopirellula baltica (strain DSM 10527 / NCIMB 13988 / SH1).